We begin with the raw amino-acid sequence, 100 residues long: Pancreatic trypsin inhibitor (100 aa).

An N-terminal signal peptide occupies residues 1-21; that stretch reads MKMSRLCLSVALLVLLGTLAA. Residues 22–35 constitute a propeptide that is removed on maturation; it reads STPGCDTSNQAKAQ. Positions 40-90 constitute a BPTI/Kunitz inhibitor domain; sequence CLEPPYTGPCKARIIRYFYNAKAGLCQTFVYGGCRAKRNNFKSAEDCMRTC. 3 disulfides stabilise this stretch: C40-C90, C49-C73, and C65-C86. Positions 94–100 are excised as a propeptide; sequence IGPWENL.

It localises to the secreted. Functionally, inhibits trypsin, kallikrein, chymotrypsin, and plasmin. The protein is Pancreatic trypsin inhibitor of Bos taurus (Bovine).